The primary structure comprises 167 residues: Fimbrial adapter PapF (167 aa).

An N-terminal signal peptide occupies residues M1–L18.

It is found in the secreted. It localises to the fimbrium. Its function is as follows. Adapter that links the PapG adhesin to the distal end of the tip fibrillum. PapF is required for the correct presentation of the adhesin at the distal end of the tip fibrillum. Pili are polar filaments radiating from the surface of the bacterium to a length of 0.5-1.5 micrometers and numbering 100-300 per cell, and enable bacteria to colonize the epithelium of specific host organs. This Escherichia coli protein is Fimbrial adapter PapF (papF).